A 507-amino-acid polypeptide reads, in one-letter code: Arabinose import ATP-binding protein AraG (507 aa).

2 consecutive ABC transporter domains span residues leucine 8–arginine 243 and proline 255–isoleucine 499. An ATP-binding site is contributed by glycine 40–serine 47.

Belongs to the ABC transporter superfamily. Arabinose importer (TC 3.A.1.2.2) family. The complex is composed of two ATP-binding proteins (AraG), two transmembrane proteins (AraH) and a solute-binding protein (AraF).

It is found in the cell inner membrane. It carries out the reaction L-arabinose(out) + ATP + H2O = L-arabinose(in) + ADP + phosphate + H(+). Its function is as follows. Part of the ABC transporter complex AraFGH involved in arabinose import. Responsible for energy coupling to the transport system. The protein is Arabinose import ATP-binding protein AraG of Pectobacterium atrosepticum (strain SCRI 1043 / ATCC BAA-672) (Erwinia carotovora subsp. atroseptica).